A 541-amino-acid polypeptide reads, in one-letter code: Eukaryotic translation initiation factor 3 subunit E (541 aa).

The PCI domain occupies 252–443; the sequence is VEMFLSPVYL…GMVFMNPTHP (192 aa). Residues 466 to 541 are disordered; the sequence is AIDRKAHPPS…QQPAQAIAAN (76 aa). Over residues 490–502 the composition is skewed to gly residues; the sequence is NAGGRGGRGGQRN. A compositionally biased stretch (basic and acidic residues) spans 506–522; sequence QRDRSHAHNNEAKREGE. The span at 523-541 shows a compositional bias: low complexity; it reads SASAEEAQQQQPAQAIAAN.

This sequence belongs to the eIF-3 subunit E family. As to quaternary structure, component of the eukaryotic translation initiation factor 3 (eIF-3) complex.

The protein resides in the cytoplasm. Functionally, component of the eukaryotic translation initiation factor 3 (eIF-3) complex, which is involved in protein synthesis of a specialized repertoire of mRNAs and, together with other initiation factors, stimulates binding of mRNA and methionyl-tRNAi to the 40S ribosome. The eIF-3 complex specifically targets and initiates translation of a subset of mRNAs involved in cell proliferation. This chain is Eukaryotic translation initiation factor 3 subunit E, found in Mycosarcoma maydis (Corn smut fungus).